The following is a 552-amino-acid chain: Olefin beta-lactone synthetase (552 aa).

Residues 182-190 (TSGSTGVPK), 316-321 (TPYGAT), Asp-425, and Arg-440 each bind ATP.

This sequence belongs to the ATP-dependent AMP-binding enzyme family. In terms of assembly, monomer.

It carries out the reaction a (2R,3S)-2-alkyl-3-hydroxyalkanoate + ATP = a cis-3-alkyl-4-alkyloxetan-2-one + AMP + diphosphate. Involved in olefin biosynthesis. Catalyzes the conversion of beta-hydroxy acid substrates to beta-lactones in the presence of ATP. Can use all four stereoisomers of 2-hexyl-3-hydroxydecanoic acid. This Stenotrophomonas maltophilia (strain K279a) protein is Olefin beta-lactone synthetase.